A 475-amino-acid polypeptide reads, in one-letter code: ATP synthase subunit beta (475 aa).

156-163 (GGAGVGKT) provides a ligand contact to ATP.

The protein belongs to the ATPase alpha/beta chains family. F-type ATPases have 2 components, CF(1) - the catalytic core - and CF(0) - the membrane proton channel. CF(1) has five subunits: alpha(3), beta(3), gamma(1), delta(1), epsilon(1). CF(0) has three main subunits: a(1), b(2) and c(9-12). The alpha and beta chains form an alternating ring which encloses part of the gamma chain. CF(1) is attached to CF(0) by a central stalk formed by the gamma and epsilon chains, while a peripheral stalk is formed by the delta and b chains.

The protein resides in the cell membrane. It catalyses the reaction ATP + H2O + 4 H(+)(in) = ADP + phosphate + 5 H(+)(out). Its function is as follows. Produces ATP from ADP in the presence of a proton gradient across the membrane. The catalytic sites are hosted primarily by the beta subunits. The sequence is that of ATP synthase subunit beta from Mycoplasma pneumoniae (strain ATCC 29342 / M129 / Subtype 1) (Mycoplasmoides pneumoniae).